Here is a 207-residue protein sequence, read N- to C-terminus: Holliday junction branch migration complex subunit RuvA (207 aa).

The segment at 1 to 64 is domain I; sequence MIGLINGQVQ…EDAQLLYGFI (64 aa). A domain II region spans residues 65-143; it reads DRKERDVFRQ…NIEVDSSHLE (79 aa). The tract at residues 144 to 152 is flexible linker; sequence FAMQPAPIS. Residues 153-207 are domain III; it reads AEGSIIAEVEGALISLGYKEREAQQAIKAAKSNGETFADTQSLLKATLQQFQSFK.

This sequence belongs to the RuvA family. As to quaternary structure, homotetramer. Forms an RuvA(8)-RuvB(12)-Holliday junction (HJ) complex. HJ DNA is sandwiched between 2 RuvA tetramers; dsDNA enters through RuvA and exits via RuvB. An RuvB hexamer assembles on each DNA strand where it exits the tetramer. Each RuvB hexamer is contacted by two RuvA subunits (via domain III) on 2 adjacent RuvB subunits; this complex drives branch migration. In the full resolvosome a probable DNA-RuvA(4)-RuvB(12)-RuvC(2) complex forms which resolves the HJ.

It localises to the cytoplasm. Functionally, the RuvA-RuvB-RuvC complex processes Holliday junction (HJ) DNA during genetic recombination and DNA repair, while the RuvA-RuvB complex plays an important role in the rescue of blocked DNA replication forks via replication fork reversal (RFR). RuvA specifically binds to HJ cruciform DNA, conferring on it an open structure. The RuvB hexamer acts as an ATP-dependent pump, pulling dsDNA into and through the RuvAB complex. HJ branch migration allows RuvC to scan DNA until it finds its consensus sequence, where it cleaves and resolves the cruciform DNA. The sequence is that of Holliday junction branch migration complex subunit RuvA from Psychrobacter cryohalolentis (strain ATCC BAA-1226 / DSM 17306 / VKM B-2378 / K5).